The chain runs to 590 residues: V-type ATP synthase alpha chain (590 aa).

Position 234–241 (234–241 (GGFGAGKT)) interacts with ATP.

Belongs to the ATPase alpha/beta chains family.

The enzyme catalyses ATP + H2O + 4 H(+)(in) = ADP + phosphate + 5 H(+)(out). Functionally, produces ATP from ADP in the presence of a proton gradient across the membrane. The V-type alpha chain is a catalytic subunit. This chain is V-type ATP synthase alpha chain, found in Halothermothrix orenii (strain H 168 / OCM 544 / DSM 9562).